The chain runs to 402 residues: TBC1 domain family member 20 (402 aa).

A disordered region spans residues 1-27 (MALRPSKGDGSAGRWDRGAGKADFNAK). The segment covering 14–26 (RWDRGAGKADFNA) has biased composition (basic and acidic residues). In terms of domain architecture, Rab-GAP TBC spans 59-245 (LLTDEIRCQV…RLYDFFLACH (187 aa)). Transmembrane regions (helical) follow at residues 237–257 (LYDF…AVIV) and 366–386 (FVKL…LAVV).

The protein resides in the membrane. GTPase-activating protein specific for Rab1 and Rab2 small GTPase families for which it can accelerate the intrinsic GTP hydrolysis rate by more than five orders of magnitude. Also shows GAP activity for RAB18 GTPase. Promotes RAB18 dissociation from the endoplasmic reticulum (ER) membrane into the cytosol, probably through stimulating RAB18 GTP-hydrolysis. Involved in maintaining endoplasmic reticulum structure. The polypeptide is TBC1 domain family member 20 (Mus musculus (Mouse)).